We begin with the raw amino-acid sequence, 217 residues long: Non-structural protein NS3 (217 aa).

Belongs to the orbivirus NS3 family.

Functionally, may play a role in the release of virions from infected cells. This Camelus dromedarius (Dromedary) protein is Non-structural protein NS3 (Segment-10).